The chain runs to 163 residues: Lipoprotein signal peptidase (163 aa).

3 helical membrane-spanning segments follow: residues 11 to 31 (ILIAVFVVIFDQVTKYIIATT), 63 to 83 (KMTFFFIITIIILIALVYFFI), and 88 to 108 (YNLFMQVAISLLFAGALGNFI). Catalysis depends on residues Asp-118 and Asp-136. A helical membrane pass occupies residues 131–151 (IFNIADSSLTIGVILIIIALL).

The protein belongs to the peptidase A8 family.

The protein resides in the cell membrane. It catalyses the reaction Release of signal peptides from bacterial membrane prolipoproteins. Hydrolyzes -Xaa-Yaa-Zaa-|-(S,diacylglyceryl)Cys-, in which Xaa is hydrophobic (preferably Leu), and Yaa (Ala or Ser) and Zaa (Gly or Ala) have small, neutral side chains.. The protein operates within protein modification; lipoprotein biosynthesis (signal peptide cleavage). This protein specifically catalyzes the removal of signal peptides from prolipoproteins. This Staphylococcus aureus (strain MRSA252) protein is Lipoprotein signal peptidase.